Reading from the N-terminus, the 269-residue chain is Indole-3-glycerol phosphate synthase (269 aa).

This sequence belongs to the TrpC family.

The catalysed reaction is 1-(2-carboxyphenylamino)-1-deoxy-D-ribulose 5-phosphate + H(+) = (1S,2R)-1-C-(indol-3-yl)glycerol 3-phosphate + CO2 + H2O. Its pathway is amino-acid biosynthesis; L-tryptophan biosynthesis; L-tryptophan from chorismate: step 4/5. The chain is Indole-3-glycerol phosphate synthase from Streptomyces griseus subsp. griseus (strain JCM 4626 / CBS 651.72 / NBRC 13350 / KCC S-0626 / ISP 5235).